Reading from the N-terminus, the 789-residue chain is Glycerol-3-phosphate acyltransferase (789 aa).

Residues 276-281 (HRSYID) carry the HXXXXD motif motif.

Belongs to the GPAT/DAPAT family.

The protein resides in the cell membrane. The catalysed reaction is sn-glycerol 3-phosphate + an acyl-CoA = a 1-acyl-sn-glycero-3-phosphate + CoA. Its pathway is phospholipid metabolism; CDP-diacylglycerol biosynthesis; CDP-diacylglycerol from sn-glycerol 3-phosphate: step 1/3. The polypeptide is Glycerol-3-phosphate acyltransferase (plsB) (Mycobacterium tuberculosis (strain CDC 1551 / Oshkosh)).